A 387-amino-acid chain; its full sequence is Mitochondrial import inner membrane translocase subunit TIM50 (387 aa).

Residues 1 to 26 (MSAVSVYPMCVRASRGLLRLRQGARC) constitute a mitochondrion transit peptide. The Mitochondrial matrix portion of the chain corresponds to 27-100 (STAPPLLDVV…QKENTAYAKK (74 aa)). The tract at residues 61 to 93 (LQQQQKSQEQPPPEGEDSGHKQDEQGEDKKQKE) is disordered. The segment covering 77-93 (DSGHKQDEQGEDKKQKE) has biased composition (basic and acidic residues). Residues 101–121 (MVLRLAGIMGLGGTVGIVYIF) form a helical membrane-spanning segment. Residues 122–387 (GSNSVDEQGN…AGRFWSRKQQ (266 aa)) lie on the Mitochondrial intermembrane side of the membrane. The region spanning 178–321 (YYQPPYTLVL…YDLAAFLKTI (144 aa)) is the FCP1 homology domain.

This sequence belongs to the TIM50 family. In terms of assembly, component of the TIM23 complex at least composed of timm23, timm17 and timm50.

The protein resides in the mitochondrion inner membrane. Functionally, essential component of the TIM23 complex, a complex that mediates the translocation of transit peptide-containing proteins across the mitochondrial inner membrane. This is Mitochondrial import inner membrane translocase subunit TIM50 (timm50) from Danio rerio (Zebrafish).